Here is a 188-residue protein sequence, read N- to C-terminus: Protein SSX4 (188 aa).

A KRAB-related domain is found at 20–83; sequence KLRKAFDDIA…KRAADFHGND (64 aa). A compositionally biased stretch (basic and acidic residues) spans 116 to 127; it reads PAEEENGLKEVP. The segment at 116–167 is disordered; that stretch reads PAEEENGLKEVPEASGPQNDGKQLCPPGNPSTLEKINKTSGPKRGKHAWTHR. The span at 145–155 shows a compositional bias: polar residues; it reads PSTLEKINKTS. The segment covering 156-167 has biased composition (basic residues); the sequence is GPKRGKHAWTHR.

The protein belongs to the SSX family.

Could act as a modulator of transcription. The polypeptide is Protein SSX4 (SSX4) (Homo sapiens (Human)).